We begin with the raw amino-acid sequence, 384 residues long: Probable endopolygalacturonase C (384 aa).

Positions 1-19 (MVRQLALACGLLAAVAVQA) are cleaved as a signal peptide. Positions 20-40 (APAEPAHPMVTEAPDASLLHK) are excised as a propeptide. An intrachain disulfide couples cysteine 45 to cysteine 63. 2 PbH1 repeats span residues 176–207 (ATDL…DIGE) and 208–229 (STDI…AINS). The active-site Proton donor is aspartate 222. Cysteines 224 and 240 form a disulfide. The active site involves histidine 244. PbH1 repeat units follow at residues 254-280 (RDDN…RIKA) and 288-310 (ISDI…VIEQ). N-linked (GlcNAc...) asparagine glycosylation occurs at asparagine 261. Cystine bridges form between cysteine 349–cysteine 354 and cysteine 373–cysteine 382.

This sequence belongs to the glycosyl hydrolase 28 family.

Its subcellular location is the secreted. The catalysed reaction is (1,4-alpha-D-galacturonosyl)n+m + H2O = (1,4-alpha-D-galacturonosyl)n + (1,4-alpha-D-galacturonosyl)m.. Functionally, involved in maceration and soft-rotting of plant tissue. Hydrolyzes the 1,4-alpha glycosidic bonds of de-esterified pectate in the smooth region of the plant cell wall. This Aspergillus aculeatus protein is Probable endopolygalacturonase C (pgaC).